The following is a 450-amino-acid chain: MRKDWCEARKNDPTPTQMYYAKNGVITPEMEYVAKVEMLKPEYIRQLVAEGKLIIPANINHTNQIPMAIGRAVKCKINANIGSSALASDINEEIEKLKVCLKYGADTVMDLSTGGDLDEIRRAIIANSTVPIGTVPIYQIIHDIKDLDNLTPQIMLECIEKQAKQGVSYFTIHAGFLLKFMPLVAKRKMGIVSRGGSLMASWMMKHHKENPFYEAFDEICDICAKYDASLSLGDSLRPGCLHDASDEAQMSELAVLGELTKRAWEKNVQVMVEGPGHVPFNQIEFNMKEEKRLCHDAPFYILGPLPTDIGAGYDHITSAIGGTMAAFHGASMLCYVTPKEHLGLPNAKDVRDGIISHKIAAHAADIALGRVGAIERDHAMSDARYKFDWNKQFELALDPDKARELHDESLPQDVFKEAEFCSMCGPKFCAYKISQEIAKIECSDYPKEKK.

Substrate contacts are provided by residues Asn80, Met109, Tyr138, His173, 193 to 195 (SRG), 234 to 237 (DSLR), and Glu273. His277 contacts Zn(2+). Tyr300 serves as a coordination point for substrate. His341 serves as a coordination point for Zn(2+). Residues Cys421, Cys424, and Cys429 each coordinate [4Fe-4S] cluster.

It belongs to the ThiC family. As to quaternary structure, homodimer. The cofactor is [4Fe-4S] cluster.

It catalyses the reaction 5-amino-1-(5-phospho-beta-D-ribosyl)imidazole + S-adenosyl-L-methionine = 4-amino-2-methyl-5-(phosphooxymethyl)pyrimidine + CO + 5'-deoxyadenosine + formate + L-methionine + 3 H(+). Its pathway is cofactor biosynthesis; thiamine diphosphate biosynthesis. Its function is as follows. Catalyzes the synthesis of the hydroxymethylpyrimidine phosphate (HMP-P) moiety of thiamine from aminoimidazole ribotide (AIR) in a radical S-adenosyl-L-methionine (SAM)-dependent reaction. The chain is Phosphomethylpyrimidine synthase from Campylobacter fetus subsp. fetus (strain 82-40).